A 948-amino-acid polypeptide reads, in one-letter code: Phosphoenolpyruvate carboxylase (948 aa).

Catalysis depends on residues H138 and K610.

Belongs to the PEPCase type 1 family. Mg(2+) serves as cofactor.

The enzyme catalyses oxaloacetate + phosphate = phosphoenolpyruvate + hydrogencarbonate. Forms oxaloacetate, a four-carbon dicarboxylic acid source for the tricarboxylic acid cycle. This is Phosphoenolpyruvate carboxylase from Streptococcus sanguinis (strain SK36).